The following is a 377-amino-acid chain: MLDYLNIRRDLHQIPEIGLEEYKTHAYLMQVIDGLTAGLDFVEIRTWRTGILVFIKGSSPDKTIGWRTDIDGLPIVEDTGLDFASTHEGRMHACGHDMHMTVALGLLEQAVSTQPTHNLLFLFQPAEENEAGGMLMYEDGAFGDWLPDEFYGLHVRPDLKVGDIATNRGTLFAGTCEVKLTFKGKGGHAAFPHEANDALVAASYFITQVQTIVSRNVDPIEGAVVTFGSLHAGTTNNVIAETAFLHGTIRTLTQEMNLLTQKRLREIAEGLAQSFGLELDLELKQGGYLPVENHPDLADELMDFFQKEEGVQLIDIEPAMTGEDFGYLLSKVKGVMFWLGVDSPYALHHPKMTPDEAALPFAIEKIGKFLDYKINER.

Residue aspartate 69 is part of the active site. The Proton acceptor role is filled by glutamate 128.

The protein belongs to the peptidase M20A family. N-acetyldiaminopimelate deacetylase subfamily.

The catalysed reaction is N-acetyl-(2S,6S)-2,6-diaminopimelate + H2O = (2S,6S)-2,6-diaminopimelate + acetate. Its pathway is amino-acid biosynthesis; L-lysine biosynthesis via DAP pathway; LL-2,6-diaminopimelate from (S)-tetrahydrodipicolinate (acetylase route): step 3/3. Its function is as follows. Catalyzes the conversion of N-acetyl-diaminopimelate to diaminopimelate and acetate. This chain is N-acetyldiaminopimelate deacetylase, found in Streptococcus sanguinis (strain SK36).